The sequence spans 351 residues: uncharacterized protein (351 aa).

The region spanning 14-69 is the HTH lacI-type domain; it reads PRLADIAAQAQVSEATASRVLNGRPASRXSTRQRVLAALDLLGYERPTRLRRRSAG. Positions 16 to 35 form a DNA-binding region, H-T-H motif; it reads LADIAAQAQVSEATASRVLN.

Putative sugar-binding regulatory protein for the alpha-amylase gene. This is an uncharacterized protein from Streptomyces limosus (Streptomyces albidoflavus).